Reading from the N-terminus, the 954-residue chain is MDGQIDKMEKRYSMTKLENRLRTFQDGVALEKKKLKWSFKVIPYQAMAKLGFYFDPVIDPKTSKLKKDSVRCCYCHRQTYNVRDCRSKRKDVLETLSNIMRQHLTVTDNKQVCLLIYLRNKLLTDYSFHMGVSDWKNDKYFSNPDDENVINLRKFTFQDNWPHSGSQNEHPLGIEKMVNAGLMRYDSSIEGLGDPSMDKTLMNDTCYCIYCKQLLQGWSINDDPMSRHYKVSQNGNCYFFQTRNRFERIKNDNDSITKNCEVSPTLGENGKREVINTKTASQRQCPLFESPPSSTGPQLDDYNEKTDISVIQHNISVLDGAQGENVKRNSVEEKEQINMENGSTTLEEGNINRDVLADKKEVISTPTAKEIKRPNVQLTQSSSPIKKKRKFKRISPRKIFDEEDSEHSLNNNSANGDNKDKDLVIDFTSHIIKNRDVGRKNAILDDSTDEFSFSNQGHNTFDIPIPTSSHLLKGIDSDNDNVIREDDTGINTDTKGASSKHEKFSVNSEEDLNFSEVKLTGRDSSTNILIRTQIVDQNLGDIDRDKVPNGGSPEVPKTHELIRDNSEKREAQNGEFRHQKDSTVRQSPDILHSNKSGDNSSNITAIPKEEQRRGNSKTSSIPADIHPKPRKNLQEPRSLSISGKVVPTERKLDNINIDLNFSASDFSPSSQSEQSSKSSSVISTPVASPKINLTRSLHAVKELSGLKKETDDGKYFTNKQETIKILEDVSVKNETPNNEMLLFETGTPIASQENKSRKLFDEEFSGKELDIPIDSSTVEIKKVIKPEFEPVPSVARNLVSGTSSYPRNSRLEEQRKETSTSLADNSKKGSSFNEGNNEKEPNAAEWFKIDENRHLVKNYFHDLLKYINNNDATLANDKDGDLAFLIKQMPAEELDMTFNNWVNLKVQSIKREFIDDCDKKLDILRRDYYTATNFIETLEDDNQLIDIAKKMGIL.

2 BIR repeats span residues 20–117 (RLRT…LLIY) and 153–241 (RKFT…YFFQ). Cys-208, Cys-211, His-228, and Cys-237 together coordinate Zn(2+). The disordered stretch occupies residues 375–419 (NVQLTQSSSPIKKKRKFKRISPRKIFDEEDSEHSLNNNSANGDNK). A compositionally biased stretch (basic residues) spans 385–396 (IKKKRKFKRISP). Phosphoserine is present on residues Ser-477, Ser-508, and Ser-552. 2 disordered regions span residues 541–645 (DIDR…SGKV) and 661–685 (FSAS…ISTP). Positions 556–583 (PKTHELIRDNSEKREAQNGEFRHQKDST) are enriched in basic and acidic residues. Residue Ser-587 is modified to Phosphoserine. The span at 593 to 604 (SNKSGDNSSNIT) shows a compositional bias: polar residues. Residues Ser-751 and Ser-765 each carry the phosphoserine modification. The interval 798-839 (LVSGTSSYPRNSRLEEQRKETSTSLADNSKKGSSFNEGNNEK) is disordered. Positions 809-818 (SRLEEQRKET) are enriched in basic and acidic residues. Over residues 819-835 (STSLADNSKKGSSFNEG) the composition is skewed to polar residues.

Component of the CPC complex at least composed of IPL1, BIR1 and SLI15. Interacts with CBF2/NDC10. Interacts with CBF3D/SKP1.

In terms of biological role, component of the chromosomal passenger complex (CPC), a complex that acts as a key regulator of chromosome segregation and cytokinesis. This Saccharomyces cerevisiae (strain ATCC 204508 / S288c) (Baker's yeast) protein is Chromosomal passenger complex protein BIR1 (BIR1).